The sequence spans 157 residues: Acetyltransferase PseH (157 aa).

Residues 5 to 152 (KNFTELNSQE…YHICLKQSDC (148 aa)) form the N-acetyltransferase domain.

In terms of biological role, catalyzes the third step in the biosynthesis of pseudaminic acid, a sialic-acid-like sugar that is used to modify flagellin. Mediates N-4 acetylation of UDP-4-amino-4,6-dideoxy-beta-L-AltNAc to form UDP-2,4-diacetamido-2,4,6-trideoxy-beta-L-altropyranose. This chain is Acetyltransferase PseH (pseH), found in Campylobacter jejuni subsp. jejuni serotype O:23/36 (strain 81-176).